We begin with the raw amino-acid sequence, 644 residues long: MEETMKLATMEDTVEYCLFLIPDESRDSDKHKEILQKYIERIITRFAPMLVPYIWQNQPFNLKYKPGKGGVPAHMFGVTKFGDNIEDEWFIVYVIKQITKEFPELVARIEDNDGEFLLIEAADFLPKWLDPENSTNRVFFCHGELCIIPAPRKSGAESWLPTTPPTIPQALNIITAHSEKILASESIRAAVNRRIRGYPEKIQASLHRAHCFLPAGIVAVLKQRPRLVAAAVQAFYLRDPIDLRACRVFKTFLPETRIMTSVTFTKCLYAQLVQQRFVPDRRSGYRLPPPSDPQYRAHELGMKLAHGFEILCSKCSPHFSDCKKSLVTASPLWASFLESLKKNDYFKGLIEGSAQYRERLEMAENYFQLSVDWPESSLAMSPGEEILTLLQTIPFDIEDLKKEAANLPPEDDDQWLDLSPDQLDQLLQEAVGKKESESVSKEEKEQNYDLTEVSESMKAFISKVSTHKGAELPREPSEAPITFDADSFLNYFDKILGPRPNESDSDDLDDEDFECLDSDDDLDFETHEPGEEASLKGTLDNLKSYMAQMDQELAHTCISKSFTTRNQVEPVSQTTDNNSDEEDSGTGESVMAPVDVDLNLVSNILESYSSQAGLAGPASNLLQSMGVQLPDNTDHRPTSKPTKN.

Disordered regions lie at residues 430–449, 496–537, 567–589, and 623–644; these read AVGK…QNYD, LGPR…SLKG, QVEP…TGES, and QSMG…PTKN. Basic and acidic residues predominate over residues 431-447; that stretch reads VGKKESESVSKEEKEQN. Positions 439-644 are transcription activation; it reads VSKEEKEQNY…HRPTSKPTKN (206 aa). An involved in nuclear export region spans residues 481 to 497; that stretch reads ITFDADSFLNYFDKILG. The segment at 502–532 is acidic region required for transactivation activity; it reads ESDSDDLDDEDFECLDSDDDLDFETHEPGEE. A phosphoserine mark is found at S503, S505, and S518. Residues 503 to 523 show a composition bias toward acidic residues; sequence SDSDDLDDEDFECLDSDDDLD. Basic and acidic residues predominate over residues 524-534; the sequence is FETHEPGEEAS. The segment covering 567-577 has biased composition (polar residues); sequence QVEPVSQTTDN.

This sequence belongs to the ECD family. As to quaternary structure, interacts with TP53, MDM2, TXNIP. Interacts (phosphorylated) with PIH1D1. Interacts with RUVBL1 mediating the PIH1D1-independent association with the R2TP complex. Interacts with RB1, RBL1 and RBL2; ECD competes with E2F1 for binding to hypophospshorylated RB1. Interacts with EP300. Interacts with DDX39A. Phosphorylated predominantly by CK2 on two serine-containing clusters; involved in cell cycle regulation activity. Highly expressed in muscle and heart. Over-expressed in pancreatic and breast cancers.

The protein localises to the cytoplasm. The protein resides in the nucleus. Its function is as follows. Regulator of p53/TP53 stability and function. Inhibits MDM2-mediated degradation of p53/TP53 possibly by cooperating in part with TXNIP. May be involved transcriptional regulation. In vitro has intrinsic transactivation activity enhanced by EP300. May be a transcriptional activator required for the expression of glycolytic genes. Involved in regulation of cell cycle progression. Proposed to disrupt Rb-E2F binding leading to transcriptional activation of E2F proteins. The cell cycle -regulating function may depend on its RUVBL1-mediated association with the R2TP complex. May play a role in regulation of pre-mRNA splicing. Participates together with DDX39A in mRNA nuclear export. This Homo sapiens (Human) protein is Protein ecdysoneless homolog (ECD).